The following is a 100-amino-acid chain: Large ribosomal subunit protein uL23 (100 aa).

This sequence belongs to the universal ribosomal protein uL23 family. In terms of assembly, part of the 50S ribosomal subunit. Contacts protein L29, and trigger factor when it is bound to the ribosome.

Functionally, one of the early assembly proteins it binds 23S rRNA. One of the proteins that surrounds the polypeptide exit tunnel on the outside of the ribosome. Forms the main docking site for trigger factor binding to the ribosome. In Prochlorococcus marinus (strain AS9601), this protein is Large ribosomal subunit protein uL23.